The following is a 159-amino-acid chain: Dehydratase GME11372 (159 aa).

Catalysis depends on residues His79 and His104.

It belongs to the scytalone dehydratase family. Homotrimer. Each subunit contains an active site, located in the central part of the hydrophobic core of the monomer, which functions independently.

It functions in the pathway secondary metabolite biosynthesis. Dehydratase; part of the gene cluster that mediates the biosynthesis of dibenzodioxocinones such as pestalotiollide B, a novel class of inhibitors against cholesterol ester transfer protein (CEPT). The biosynthesis initiates from condensation of acetate and malonate units catalyzed by the non-reducing PKS pks8/GME11356. Pks8/GME11356 lacks a thioesterase (TE) domain, which is important to the cyclizing of the third ring of atrochrysone carboxylic acid, and the esterase GME11355 might play the role of TE and catalyzes the cyclization reaction of the C ring. The lactamase-like protein GME11357 (or other beta-lactamases in Pestalotiopsis microspora) probably hydrolyzes the thioester bond between the ACP of pks8/GME11356 and the intermediate to release atrochrysone carboxylic acid, which is spontaneously dehydrates to form endocrocin anthrone. Endocrocin anthrone is further converted to emodin via the endocrocin intermediate. Emodin is then oxidized by several enzymes such as the Baeyer-Villiger oxidase GME11358, the oxidoreductase GME11367, the short chain dehydrogenase/reductase GME11373, as well as by other oxidoreductases from the cluster, to modify the A and C rings and open the B ring, and finally yield monodictyphenone. The prenyltransferase GME11375 may catalyze the addition reaction between the C5 side chains and the carbon bone of dibenzodioxocinones. The remaining biochemical reactions to the final product dibenzodioxocinones should be methylation catalyzed by methyltransferase GME11366 and reduction and lactonization reaction catalyzed by a series of oxidordeuctases. The polypeptide is Dehydratase GME11372 (Pestalotiopsis microspora).